Here is a 599-residue protein sequence, read N- to C-terminus: Aspartate--tRNA(Asp/Asn) ligase (599 aa).

An L-aspartate-binding site is contributed by glutamate 173. Positions 197–200 (QLFK) are aspartate. Arginine 219 serves as a coordination point for L-aspartate. ATP is bound by residues 219–221 (RDE) and glutamine 228. Histidine 449 lines the L-aspartate pocket. ATP is bound at residue glutamate 482. An L-aspartate-binding site is contributed by arginine 489. Residue 534 to 537 (GLDR) participates in ATP binding.

The protein belongs to the class-II aminoacyl-tRNA synthetase family. Type 1 subfamily. Homodimer.

The protein resides in the cytoplasm. It catalyses the reaction tRNA(Asx) + L-aspartate + ATP = L-aspartyl-tRNA(Asx) + AMP + diphosphate. Functionally, aspartyl-tRNA synthetase with relaxed tRNA specificity since it is able to aspartylate not only its cognate tRNA(Asp) but also tRNA(Asn). Reaction proceeds in two steps: L-aspartate is first activated by ATP to form Asp-AMP and then transferred to the acceptor end of tRNA(Asp/Asn). This chain is Aspartate--tRNA(Asp/Asn) ligase, found in Marinobacter nauticus (strain ATCC 700491 / DSM 11845 / VT8) (Marinobacter aquaeolei).